The sequence spans 141 residues: Large ribosomal subunit protein uL11 (141 aa).

This sequence belongs to the universal ribosomal protein uL11 family. In terms of assembly, part of the ribosomal stalk of the 50S ribosomal subunit. Interacts with L10 and the large rRNA to form the base of the stalk. L10 forms an elongated spine to which L12 dimers bind in a sequential fashion forming a multimeric L10(L12)X complex. In terms of processing, one or more lysine residues are methylated.

Its function is as follows. Forms part of the ribosomal stalk which helps the ribosome interact with GTP-bound translation factors. The protein is Large ribosomal subunit protein uL11 of Helicobacter pylori (strain P12).